The sequence spans 360 residues: Phospho-N-acetylmuramoyl-pentapeptide-transferase (360 aa).

A run of 10 helical transmembrane segments spans residues 27–47 (GATA…IAAL), 74–94 (TMGG…WANL), 99–119 (VWVV…DDYL), 135–155 (LLLE…LGTP), 165–185 (INGF…FVIV), 199–219 (GLAI…AYLA), 236–256 (AGEL…FLWF), 263–283 (IFMG…VAVA), 288–308 (IVLA…IVQV), and 337–357 (QVVV…LSTL).

It belongs to the glycosyltransferase 4 family. MraY subfamily. It depends on Mg(2+) as a cofactor.

The protein resides in the cell inner membrane. It carries out the reaction UDP-N-acetyl-alpha-D-muramoyl-L-alanyl-gamma-D-glutamyl-meso-2,6-diaminopimeloyl-D-alanyl-D-alanine + di-trans,octa-cis-undecaprenyl phosphate = di-trans,octa-cis-undecaprenyl diphospho-N-acetyl-alpha-D-muramoyl-L-alanyl-D-glutamyl-meso-2,6-diaminopimeloyl-D-alanyl-D-alanine + UMP. Its pathway is cell wall biogenesis; peptidoglycan biosynthesis. Functionally, catalyzes the initial step of the lipid cycle reactions in the biosynthesis of the cell wall peptidoglycan: transfers peptidoglycan precursor phospho-MurNAc-pentapeptide from UDP-MurNAc-pentapeptide onto the lipid carrier undecaprenyl phosphate, yielding undecaprenyl-pyrophosphoryl-MurNAc-pentapeptide, known as lipid I. This chain is Phospho-N-acetylmuramoyl-pentapeptide-transferase, found in Methylocella silvestris (strain DSM 15510 / CIP 108128 / LMG 27833 / NCIMB 13906 / BL2).